The chain runs to 201 residues: MPIGVPKVPFRSPGEEDAVWVDVNRLHRERLLFLGQEVDSEISNQLVGLMVYLSIEDDTRDLYLFINSPGGWVIPGLTIYDTMQFVPPDVHTICMGLAASMGSFILVGGEITKRLAFPHARIMIHQPASSFYEAQAGEFILEAEELLKLRETLTRVYVQRTGNPLWIVSEDMERDVFMSATEAQAHGIVDLVAVENTGDFA.

Ser-100 functions as the Nucleophile in the catalytic mechanism. Residue His-125 is part of the active site.

It belongs to the peptidase S14 family. As to quaternary structure, component of the chloroplastic Clp protease core complex.

The protein localises to the plastid. The protein resides in the chloroplast stroma. It carries out the reaction Hydrolysis of proteins to small peptides in the presence of ATP and magnesium. alpha-casein is the usual test substrate. In the absence of ATP, only oligopeptides shorter than five residues are hydrolyzed (such as succinyl-Leu-Tyr-|-NHMec, and Leu-Tyr-Leu-|-Tyr-Trp, in which cleavage of the -Tyr-|-Leu- and -Tyr-|-Trp bonds also occurs).. Cleaves peptides in various proteins in a process that requires ATP hydrolysis. Has a chymotrypsin-like activity. Plays a major role in the degradation of misfolded proteins. This is ATP-dependent Clp protease proteolytic subunit from Chloranthus spicatus (Chulantree).